A 194-amino-acid chain; its full sequence is FMN-dependent NADH:quinone oxidoreductase (194 aa).

FMN is bound by residues S9, 15–17 (SIS), and 85–88 (MYNF).

It belongs to the azoreductase type 1 family. In terms of assembly, homodimer. FMN serves as cofactor.

The catalysed reaction is 2 a quinone + NADH + H(+) = 2 a 1,4-benzosemiquinone + NAD(+). The enzyme catalyses N,N-dimethyl-1,4-phenylenediamine + anthranilate + 2 NAD(+) = 2-(4-dimethylaminophenyl)diazenylbenzoate + 2 NADH + 2 H(+). Its function is as follows. Quinone reductase that provides resistance to thiol-specific stress caused by electrophilic quinones. Functionally, also exhibits azoreductase activity. Catalyzes the reductive cleavage of the azo bond in aromatic azo compounds to the corresponding amines. This chain is FMN-dependent NADH:quinone oxidoreductase, found in Xanthomonas oryzae pv. oryzae (strain MAFF 311018).